The following is a 386-amino-acid chain: Putative F-box/kelch-repeat protein At3g17280 (386 aa).

Residues 1–48 form the F-box domain; sequence MTTISDLPYDLLPEILSRLPTKSIPKLKTTCKKWYALFKDPKFVEKKL. Kelch repeat units follow at residues 155 to 203 and 340 to 386; these read SYKI…LKES and RIYI…IVEV.

In Arabidopsis thaliana (Mouse-ear cress), this protein is Putative F-box/kelch-repeat protein At3g17280.